The following is a 582-amino-acid chain: Putative phospholipase B-like 2 (582 aa).

Positions Met1–Ala42 are cleaved as a signal peptide. Asn91, Asn141, Asn178, Asn224, and Asn318 each carry an N-linked (GlcNAc...) asparagine glycan. Cysteines 139 and 146 form a disulfide. A disulfide bridge links Cys480 with Cys482. Asn502 carries an N-linked (GlcNAc...) asparagine glycan.

This sequence belongs to the phospholipase B-like family.

The protein localises to the secreted. In terms of biological role, putative phospholipase. This Caenorhabditis elegans protein is Putative phospholipase B-like 2.